We begin with the raw amino-acid sequence, 262 residues long: Hydroxyethylthiazole kinase (262 aa).

A substrate-binding site is contributed by Met-50. Positions 125 and 171 each coordinate ATP. Gly-198 serves as a coordination point for substrate.

This sequence belongs to the Thz kinase family. Mg(2+) serves as cofactor.

The catalysed reaction is 5-(2-hydroxyethyl)-4-methylthiazole + ATP = 4-methyl-5-(2-phosphooxyethyl)-thiazole + ADP + H(+). Its pathway is cofactor biosynthesis; thiamine diphosphate biosynthesis; 4-methyl-5-(2-phosphoethyl)-thiazole from 5-(2-hydroxyethyl)-4-methylthiazole: step 1/1. Catalyzes the phosphorylation of the hydroxyl group of 4-methyl-5-beta-hydroxyethylthiazole (THZ). This is Hydroxyethylthiazole kinase from Escherichia coli O81 (strain ED1a).